A 208-amino-acid chain; its full sequence is Endo-1,4-beta-xylanase B (208 aa).

Residues 1–16 form the signal peptide; the sequence is MKVTAAFAGLLATTLA. The 191-residue stretch at 17-207 folds into the GH11 domain; that stretch reads APATELVTRS…GTGTASVTVS (191 aa). The Nucleophile role is filled by E101. E194 acts as the Proton donor in catalysis.

The protein belongs to the glycosyl hydrolase 11 (cellulase G) family.

It is found in the secreted. The enzyme catalyses Endohydrolysis of (1-&gt;4)-beta-D-xylosidic linkages in xylans.. The protein operates within glycan degradation; xylan degradation. N-bromosuccinimide completely inhibits the catalytic activity. Its function is as follows. Endo-1,4-beta-xylanase involved in the hydrolysis of xylan, a major structural heterogeneous polysaccharide found in plant biomass representing the second most abundant polysaccharide in the biosphere, after cellulose. The protein is Endo-1,4-beta-xylanase B (xynB) of Talaromyces purpureogenus (Soft rot fungus).